We begin with the raw amino-acid sequence, 228 residues long: UPF0056 membrane protein MJ0972 (228 aa).

Helical transmembrane passes span 22–42, 68–88, 133–153, 163–183, and 201–221; these read FYIYGFVSLFITIDPIGLIPI, VVLLLFALFGNYIFGYFGITI, VPLAIPLISGPGAITTTMILI, GVVVLSILSAMLVSGIILSLT, and IMGLLLVAISVQIIFTGIVGL.

It belongs to the UPF0056 (MarC) family.

It localises to the cell membrane. The polypeptide is UPF0056 membrane protein MJ0972 (Methanocaldococcus jannaschii (strain ATCC 43067 / DSM 2661 / JAL-1 / JCM 10045 / NBRC 100440) (Methanococcus jannaschii)).